Consider the following 452-residue polypeptide: MTTRTSLTIVLAAGEGTRMRSSLPKVLHPVAGRPLLAHVLAAAPHGADDKLAVVIGPDHQAVADETKRIRPDAETFVQSERLGTAHAVLAAKQAIARGADELLIAFGDTPLISAETFARLREPLRNGSALVVLGFRAADPTGYGRLVVEGDQLAAIREQADASADELKITLCNAGVMAIDGRIALDVLAQIGNANKKGEYYLTDAVGIMRERGLRASVIETDEDEVRGINTKAQLAEAEAVMQTRLRQAAMTAGVTLISPETIHLAADTRFGKDVTIEQFVVIGPGVSIADGAVIHSFSHIVGASVGSNASVGPYARLRPGTSLGDGAKIGNFVETKAARIDAGAKVNHLTYIGDAHIGEGANIGAGTITCNYDGFNKHRTEIGAGAFIGSNSSLVAPVKIGVGAYVGSGSVVTKNVPDDSLAVERNDQTVRVGWAKRFRETSARARKPKTS.

The tract at residues 1–232 (MTTRTSLTIV…EDEVRGINTK (232 aa)) is pyrophosphorylase. UDP-N-acetyl-alpha-D-glucosamine contacts are provided by residues 11-14 (LAAG), Lys25, Gln78, and 83-84 (GT). Asp108 is a binding site for Mg(2+). UDP-N-acetyl-alpha-D-glucosamine contacts are provided by Gly144, Glu158, Asn173, and Asn230. Asn230 serves as a coordination point for Mg(2+). The linker stretch occupies residues 233-253 (AQLAEAEAVMQTRLRQAAMTA). Positions 254-452 (GVTLISPETI…SARARKPKTS (199 aa)) are N-acetyltransferase. UDP-N-acetyl-alpha-D-glucosamine-binding residues include Arg319 and Lys337. The active-site Proton acceptor is His349. Residues Tyr352 and Asn363 each contribute to the UDP-N-acetyl-alpha-D-glucosamine site. Acetyl-CoA contacts are provided by residues Ala366, 372-373 (NY), Ser391, Ser409, and Arg426.

It in the N-terminal section; belongs to the N-acetylglucosamine-1-phosphate uridyltransferase family. The protein in the C-terminal section; belongs to the transferase hexapeptide repeat family. As to quaternary structure, homotrimer. Requires Mg(2+) as cofactor.

Its subcellular location is the cytoplasm. It catalyses the reaction alpha-D-glucosamine 1-phosphate + acetyl-CoA = N-acetyl-alpha-D-glucosamine 1-phosphate + CoA + H(+). The catalysed reaction is N-acetyl-alpha-D-glucosamine 1-phosphate + UTP + H(+) = UDP-N-acetyl-alpha-D-glucosamine + diphosphate. It participates in nucleotide-sugar biosynthesis; UDP-N-acetyl-alpha-D-glucosamine biosynthesis; N-acetyl-alpha-D-glucosamine 1-phosphate from alpha-D-glucosamine 6-phosphate (route II): step 2/2. The protein operates within nucleotide-sugar biosynthesis; UDP-N-acetyl-alpha-D-glucosamine biosynthesis; UDP-N-acetyl-alpha-D-glucosamine from N-acetyl-alpha-D-glucosamine 1-phosphate: step 1/1. Its pathway is bacterial outer membrane biogenesis; LPS lipid A biosynthesis. Functionally, catalyzes the last two sequential reactions in the de novo biosynthetic pathway for UDP-N-acetylglucosamine (UDP-GlcNAc). The C-terminal domain catalyzes the transfer of acetyl group from acetyl coenzyme A to glucosamine-1-phosphate (GlcN-1-P) to produce N-acetylglucosamine-1-phosphate (GlcNAc-1-P), which is converted into UDP-GlcNAc by the transfer of uridine 5-monophosphate (from uridine 5-triphosphate), a reaction catalyzed by the N-terminal domain. The protein is Bifunctional protein GlmU of Rhodopseudomonas palustris (strain BisB5).